The chain runs to 332 residues: L-lactate dehydrogenase A chain (332 aa).

An N-acetylalanine modification is found at A2. K5 carries the post-translational modification N6-acetyllysine; alternate. K5 bears the N6-succinyllysine; alternate mark. K14 is modified (N6-acetyllysine). Residue T18 is modified to Phosphothreonine. 29 to 57 (GAVGMACAISILMKDLADELALVDVIEDK) lines the NAD(+) pocket. At K57 the chain carries N6-acetyllysine; alternate. K57 is covalently cross-linked (Glycyl lysine isopeptide (Lys-Gly) (interchain with G-Cter in SUMO2); alternate). An N6-acetyllysine modification is found at K81. R99 is a binding site for NAD(+). R106 contributes to the substrate binding site. Position 118 is an N6-acetyllysine; alternate (K118). K118 bears the N6-succinyllysine; alternate mark. An N6-acetyllysine modification is found at K126. Residues N138 and R169 each contribute to the substrate site. H193 serves as the catalytic Proton acceptor. An N6-acetyllysine mark is found at K224 and K232. Position 239 is a phosphotyrosine (Y239). N6-acetyllysine is present on K243. T248 is a binding site for substrate. T309 bears the Phosphothreonine mark. S310 carries the phosphoserine modification. Residue K318 is modified to N6-acetyllysine; alternate. N6-succinyllysine; alternate is present on K318. T322 is subject to Phosphothreonine.

This sequence belongs to the LDH/MDH superfamily. LDH family. In terms of assembly, homotetramer. Interacts with PTEN upstream reading frame protein MP31. Post-translationally, ISGylated.

It localises to the cytoplasm. The catalysed reaction is (S)-lactate + NAD(+) = pyruvate + NADH + H(+). Its pathway is fermentation; pyruvate fermentation to lactate; (S)-lactate from pyruvate: step 1/1. Its function is as follows. Interconverts simultaneously and stereospecifically pyruvate and lactate with concomitant interconversion of NADH and NAD(+). The protein is L-lactate dehydrogenase A chain (LDHA) of Pongo abelii (Sumatran orangutan).